The chain runs to 466 residues: Chromosomal replication initiator protein DnaA (466 aa).

Residues 1–77 (MSQEIWADVL…GAEHPQVEFQ (77 aa)) form a domain I, interacts with DnaA modulators region. Residues 77–121 (QVLPAAQDALLLPNDPPPAPEAAAPTPKTKAAPTPPPSTPGDNRK) form a domain II region. Residues 87 to 122 (LLPNDPPPAPEAAAPTPKTKAAPTPPPSTPGDNRKT) form a disordered region. Low complexity predominate over residues 97–108 (EAAAPTPKTKAA). The tract at residues 122 to 338 (TLNPKYTFEN…GALMRVVAFA (217 aa)) is domain III, AAA+ region. 4 residues coordinate ATP: G166, G168, K169, and T170. The tract at residues 339–466 (SLNNVPFSRA…GKEEEEEVGA (128 aa)) is domain IV, binds dsDNA.

Belongs to the DnaA family. As to quaternary structure, oligomerizes as a right-handed, spiral filament on DNA at oriC.

It localises to the cytoplasm. Functionally, plays an essential role in the initiation and regulation of chromosomal replication. ATP-DnaA binds to the origin of replication (oriC) to initiate formation of the DNA replication initiation complex once per cell cycle. Binds the DnaA box (a 9 base pair repeat at the origin) and separates the double-stranded (ds)DNA. Forms a right-handed helical filament on oriC DNA; dsDNA binds to the exterior of the filament while single-stranded (ss)DNA is stabiized in the filament's interior. The ATP-DnaA-oriC complex binds and stabilizes one strand of the AT-rich DNA unwinding element (DUE), permitting loading of DNA polymerase. After initiation quickly degrades to an ADP-DnaA complex that is not apt for DNA replication. Binds acidic phospholipids. Its function is as follows. Strand separation requires the DnaA boxes and adjacent DnaA-trio motifs but works equally well with ADP or ATP. This chain is Chromosomal replication initiator protein DnaA, found in Deinococcus radiodurans (strain ATCC 13939 / DSM 20539 / JCM 16871 / CCUG 27074 / LMG 4051 / NBRC 15346 / NCIMB 9279 / VKM B-1422 / R1).